Here is a 367-residue protein sequence, read N- to C-terminus: Peptide chain release factor 1 (367 aa).

Position 238 is an N5-methylglutamine (Gln-238).

It belongs to the prokaryotic/mitochondrial release factor family. In terms of processing, methylated by PrmC. Methylation increases the termination efficiency of RF1.

Its subcellular location is the cytoplasm. Its function is as follows. Peptide chain release factor 1 directs the termination of translation in response to the peptide chain termination codons UAG and UAA. This Dictyoglomus thermophilum (strain ATCC 35947 / DSM 3960 / H-6-12) protein is Peptide chain release factor 1.